The primary structure comprises 657 residues: DNA ligase (657 aa).

NAD(+) is bound at residue 80–81 (SL). Lys104 functions as the N6-AMP-lysine intermediate in the catalytic mechanism. NAD(+) contacts are provided by Arg125, Glu159, and Lys297. Zn(2+) contacts are provided by Cys386, Cys389, Cys406, and Cys411. One can recognise a BRCT domain in the interval 571–657 (QSEQIFENLN…EWLNNGVRPE (87 aa)).

It belongs to the NAD-dependent DNA ligase family. LigA subfamily. The cofactor is Mg(2+). Mn(2+) serves as cofactor.

It carries out the reaction NAD(+) + (deoxyribonucleotide)n-3'-hydroxyl + 5'-phospho-(deoxyribonucleotide)m = (deoxyribonucleotide)n+m + AMP + beta-nicotinamide D-nucleotide.. Functionally, DNA ligase that catalyzes the formation of phosphodiester linkages between 5'-phosphoryl and 3'-hydroxyl groups in double-stranded DNA using NAD as a coenzyme and as the energy source for the reaction. It is essential for DNA replication and repair of damaged DNA. This Ruminiclostridium cellulolyticum (strain ATCC 35319 / DSM 5812 / JCM 6584 / H10) (Clostridium cellulolyticum) protein is DNA ligase.